A 55-amino-acid polypeptide reads, in one-letter code: Large ribosomal subunit protein bL33 (55 aa).

Belongs to the bacterial ribosomal protein bL33 family.

In Methylacidiphilum infernorum (isolate V4) (Methylokorus infernorum (strain V4)), this protein is Large ribosomal subunit protein bL33.